A 199-amino-acid polypeptide reads, in one-letter code: Thymidylate kinase (199 aa).

7–14 serves as a coordination point for ATP; it reads GIDGSGKS.

The protein belongs to the thymidylate kinase family.

The enzyme catalyses dTMP + ATP = dTDP + ADP. In terms of biological role, phosphorylation of dTMP to form dTDP in both de novo and salvage pathways of dTTP synthesis. This is Thymidylate kinase from Thermosipho melanesiensis (strain DSM 12029 / CIP 104789 / BI429).